A 161-amino-acid chain; its full sequence is MLMPVHFLLLLLLLLGGPRTGLPHKFYKAKPIFSCLNTALSEAEKGQWEDASLLSKRSFHYLRSRDASSGEEEEGKEKKTFPISGARGGARGTRYRYVSQAQPRGKPRQDTAKSPHRTKFTLSLDVPTNIMNLLFNIAKAKNLRAQAAANAHLMAQIGRKK.

A signal peptide spans 1–21 (MLMPVHFLLLLLLLLGGPRTG). The propeptide occupies 22-118 (LPHKFYKAKP…QDTAKSPHRT (97 aa)). The interval 64 to 118 (SRDASSGEEEEGKEKKTFPISGARGGARGTRYRYVSQAQPRGKPRQDTAKSPHRT) is disordered. Isoleucine 157 carries the post-translational modification Isoleucine amide.

The protein belongs to the sauvagine/corticotropin-releasing factor/urotensin I family. Binds with high affinity to CRF receptors 2-alpha and 2-beta.

Its subcellular location is the secreted. Its function is as follows. Suppresses food intake, delays gastric emptying and decreases heat-induced edema. Might represent an endogenous ligand for maintaining homeostasis after stress. The sequence is that of Urocortin-3 (UCN3) from Homo sapiens (Human).